Reading from the N-terminus, the 297-residue chain is Coatomer subunit epsilon-2 (297 aa).

It belongs to the COPE family. As to quaternary structure, oligomeric complex that consists of at least the alpha, beta, beta', gamma, delta, epsilon and zeta subunits.

It is found in the cytoplasm. Its subcellular location is the golgi apparatus membrane. It localises to the cytoplasmic vesicle. The protein localises to the COPI-coated vesicle membrane. In terms of biological role, the coatomer is a cytosolic protein complex that binds to dilysine motifs and reversibly associates with Golgi non-clathrin-coated vesicles, which further mediate biosynthetic protein transport from the ER, via the Golgi up to the trans Golgi network. The coatomer complex is required for budding from Golgi membranes, and is essential for the retrograde Golgi-to-ER transport of dilysine-tagged proteins. The sequence is that of Coatomer subunit epsilon-2 from Oryza sativa subsp. japonica (Rice).